Here is a 989-residue protein sequence, read N- to C-terminus: Putative transcription elongation factor SPT5 homolog 2 (989 aa).

Residues M1 to Y26 are compositionally biased toward acidic residues. Residues M1–V82 form a disordered region. A compositionally biased stretch (basic residues) spans S31–R42. Residues W65–V82 are compositionally biased toward acidic residues. KOW domains are found at residues D260–V287, H412–E439, Y464–H491, V588–G615, and D683–K710. A disordered region spans residues M790–Y852. The segment covering P842–Y852 has biased composition (low complexity). A KOW 6 domain is found at C936–Q963.

It belongs to the SPT5 family.

Its subcellular location is the nucleus. In terms of biological role, may regulate transcription elongation by RNA polymerase II. May enhance transcriptional pausing at sites proximal to the promoter, which may in turn facilitate the assembly of an elongation competent RNA polymerase II complex. This is Putative transcription elongation factor SPT5 homolog 2 from Arabidopsis thaliana (Mouse-ear cress).